The following is a 180-amino-acid chain: Probable cobalt-precorrin-6B C(15)-methyltransferase (decarboxylating) (180 aa).

Residues Thr16, 40–44 (GCGSG), Asp61, and Ala89 each bind S-adenosyl-L-methionine.

This sequence belongs to the methyltransferase superfamily. Archaeal-type CbiT family.

It carries out the reaction Co-precorrin-6B + S-adenosyl-L-methionine = Co-precorrin-7 + S-adenosyl-L-homocysteine + CO2. The protein operates within cofactor biosynthesis; adenosylcobalamin biosynthesis; cob(II)yrinate a,c-diamide from sirohydrochlorin (anaerobic route): step 8/10. In terms of biological role, catalyzes the methylation of C-15 in cobalt-precorrin-6B followed by the decarboxylation of C-12 to form cobalt-precorrin-7. The protein is Probable cobalt-precorrin-6B C(15)-methyltransferase (decarboxylating) of Methanococcus vannielii (strain ATCC 35089 / DSM 1224 / JCM 13029 / OCM 148 / SB).